The following is a 347-amino-acid chain: Selenide, water dikinase (347 aa).

Residue Cys-17 is part of the active site. ATP-binding positions include Lys-20 and 48–50; that span reads TRD. Asp-51 serves as a coordination point for Mg(2+). ATP is bound by residues Asp-68, Asp-91, and 139-141; that span reads GHS. Asp-91 is a binding site for Mg(2+). Asp-227 serves as a coordination point for Mg(2+).

It belongs to the selenophosphate synthase 1 family. Class I subfamily. Homodimer. It depends on Mg(2+) as a cofactor.

The catalysed reaction is hydrogenselenide + ATP + H2O = selenophosphate + AMP + phosphate + 2 H(+). In terms of biological role, synthesizes selenophosphate from selenide and ATP. The polypeptide is Selenide, water dikinase (Enterobacter sp. (strain 638)).